The primary structure comprises 1400 residues: S phase cyclin A-associated protein in the endoplasmic reticulum (1400 aa).

Disordered regions lie at residues 36 to 61 (ESKD…GTHK), 226 to 277 (VKAH…IRSR), 517 to 550 (PARP…HEEK), and 701 to 723 (RIEQ…RARD). Residues 231–243 (TGSTASSEITPAQ) show a composition bias toward polar residues. Positions 539 to 550 (TIAESKKKHEEK) are enriched in basic and acidic residues. Residues 792–816 (KQCSLCNVLISSEVYLFSHVKGRKH) form a C2H2-type zinc finger. Serine 832 carries the post-translational modification Phosphoserine.

Interacts with CCNA2/CDK2 complex, but not with CCNA2/CDC2, CCNB1/CDC2 or CCNE1/CDK2 complexes, at multiple phases of the cell cycle, including S and G2/M. Post-translationally, phosphorylated in vitro by the CCNA2/CDK2 complex. Widely expressed with high expression in testis. Isoform 1 is detected in various tissues, including retina, fetal and adult brain. Isoform 2 is expressed in the retina at high levels, and in the brain at very low levels.

It is found in the endoplasmic reticulum. The protein localises to the nucleus. CCNA2/CDK2 regulatory protein that transiently maintains CCNA2 in the cytoplasm. The sequence is that of S phase cyclin A-associated protein in the endoplasmic reticulum from Homo sapiens (Human).